Reading from the N-terminus, the 345-residue chain is MIKSKKILSLIIAGVLGVSMLTGCSQNDGSNASNENKKTDSKKQKNIGISQLVEHPSLDKAKKGFIKALEDKGYKDGDNIKIDFQNAQNDMPTTQSIASKFVSDKKDLIYAISTPSAQAAYNATKDIPIIMTAVTDPVEAGLVKSLEKPGGNVSGTSDYLSIDKTLELVKTLTPKAKKIGVIYNTSEVNSKIQVDSLHDYAKKNNYEVVEKGISTSSEVNQAISSLVGKIDVLYVPTDNLIVSSMPIVSKVANENKIPIIASEEGSVSSGALACCGIDYEKLGYKAGELAIEVLEGKSVGDIPVTTLDETEIIINEDTLKALDMQKLSADNIKYIKSDENAKSAK.

The first 23 residues, 1-23 (MIKSKKILSLIIAGVLGVSMLTG), serve as a signal peptide directing secretion. Cys24 carries the N-palmitoyl cysteine lipid modification. A lipid anchor (S-diacylglycerol cysteine) is attached at Cys24.

In terms of assembly, the complex is probably composed of two ATP-binding proteins (CDR20291_0806), two transmembrane proteins (CDR20291_0807) and a solute-binding protein (CDR20291_0805).

The protein localises to the cell membrane. Its function is as follows. Probably part of an ABC transporter complex involved in tyrosine uptake. May also import phenylalanine. This chain is Tyrosine-binding protein, found in Clostridioides difficile (strain R20291) (Peptoclostridium difficile).